The chain runs to 240 residues: Oxygen-insensitive NADPH nitroreductase (240 aa).

FMN is bound by residues 11–15 (HRSIR), Ser39, Gln67, 128–131 (YIGG), and 167–169 (KPR).

The protein belongs to the flavin oxidoreductase frp family. Homodimer. FMN serves as cofactor.

Functionally, catalyzes the reduction of nitroaromatic compounds using NADPH. Has a broad electron acceptor specificity. Reduces nitrofurazone by a ping-pong bi-bi mechanism possibly to generate a two-electron transfer product. Major oxygen-insensitive nitroreductase in E.coli. This Escherichia coli (strain K12) protein is Oxygen-insensitive NADPH nitroreductase (nfsA).